A 284-amino-acid polypeptide reads, in one-letter code: Bifunctional protein FolD (284 aa).

NADP(+) is bound by residues 166–168 (GAS) and I232.

This sequence belongs to the tetrahydrofolate dehydrogenase/cyclohydrolase family. In terms of assembly, homodimer.

It catalyses the reaction (6R)-5,10-methylene-5,6,7,8-tetrahydrofolate + NADP(+) = (6R)-5,10-methenyltetrahydrofolate + NADPH. The enzyme catalyses (6R)-5,10-methenyltetrahydrofolate + H2O = (6R)-10-formyltetrahydrofolate + H(+). It functions in the pathway one-carbon metabolism; tetrahydrofolate interconversion. Catalyzes the oxidation of 5,10-methylenetetrahydrofolate to 5,10-methenyltetrahydrofolate and then the hydrolysis of 5,10-methenyltetrahydrofolate to 10-formyltetrahydrofolate. This Shewanella sp. (strain W3-18-1) protein is Bifunctional protein FolD.